The primary structure comprises 926 residues: MAASVDRQYHPAPMSGVVRTPFSNHHRSDSPVRNGYTFSNPPSSNGVVKPGEKIKLVDNNSNSNNGSNNNNNRYDSDSEEDDDENEMNVWNEMIKKGNSELEPSSVDSRDEGTADQWIERNPSMIRLTGKHPFNSEPPLTRLMHHGFLTPVPLHYVRNHGPVPNAKWEDWTVEVTGLVKRPIRFTMDQLVNDFQSREFPVTLVCAGNRRKEQNMTKQSIGFNWGSAAVSTSVWRGVPLRDVLKRCGVMSSLKGALNVCFEGAEDLPGGGGSKYGTSVKREFAMDPARDIILAYMQNGEKLSPDHGYPVRMIIPGFIGGRMVKWLKRIIVTTTESDNYYHYKDNRVLPSHVDAELANSEAWWYKQEYIINELNVNSVITSPCHEEILPINAWTTQRPYTMRGYAYSGGGRKVTRVEVTMDGGDTWDICELDHQERGSKYGKFWCWCFWSLEVEVLDLLGAKEIGVRAWDESLNTQPEKLIWNVMGMMNNCWFRVKTNVCKPHKGEIGIVFEHPTQPGNKSGGWMARERHLEISDSGPTLKRTASTPFMNTTSKMYSMSEVKKHNTADSAWIVVHGNVYNATRFLKDHPGGSDSILINAGTDCTEEFDAIHSDKAKRLLEDFRIGELISTGYTSDSSSPGNSVHGGSVYSGLAGLAPITEAVPLRNVALNPRVKIPCKLIEKVSLSHDVRRFRFGLPSEDQVLGLPVGKHIFLCANVDDKLCMRAYTPSSTIDVVGYFDLVVKVYFKDVHPRFPNGGVMSQHLDSLSLGSIVDVKGPLGHIEYLGKGNFTVHGKPKFAKKLAMISGGTGITPIYQVMQAILKDPEDKTEMHVVYANRTEEDILLREELDKWADEFRDRVKVWYVVEKAEEGWKYDTGFISEKILRDHVPAVGDDVLALTCGPPPMIQFAVQPNLDKMGFDIKEQLLIF.

The segment at 1-85 is disordered; the sequence is MAASVDRQYH…SDSEEDDDEN (85 aa). The span at 36–46 shows a compositional bias: polar residues; sequence YTFSNPPSSNG. Over residues 58 to 73 the composition is skewed to low complexity; it reads DNNSNSNNGSNNNNNR. Cysteine 204 contributes to the Mo-molybdopterin binding site. The Cytochrome b5 heme-binding domain occupies 551–626; sequence SKMYSMSEVK…LEDFRIGELI (76 aa). The heme site is built by histidine 586 and histidine 609. An FAD-binding FR-type domain is found at 670–782; sequence RVKIPCKLIE…KGPLGHIEYL (113 aa). FAD is bound by residues 722–725, 739–743, phenylalanine 744, phenylalanine 751, 756–758, and threonine 809; these read RAYT, VVKVY, and VMS.

The protein belongs to the nitrate reductase family. In terms of assembly, homodimer. FAD is required as a cofactor. The cofactor is heme. Requires Mo-molybdopterin as cofactor.

The catalysed reaction is nitrite + NAD(+) + H2O = nitrate + NADH + H(+). Nitrate reductase is a key enzyme involved in the first step of nitrate assimilation in plants, fungi and bacteria. The sequence is that of Nitrate reductase [NADH] (NIA) from Spinacia oleracea (Spinach).